Consider the following 624-residue polypeptide: tRNA uridine 5-carboxymethylaminomethyl modification enzyme MnmG (624 aa).

Residues 13–18 (GGGHAG), V125, and S180 contribute to the FAD site. 273 to 287 (GPRYCPSIEDKIVRF) provides a ligand contact to NAD(+). Residue Q370 participates in FAD binding.

It belongs to the MnmG family. As to quaternary structure, homodimer. Heterotetramer of two MnmE and two MnmG subunits. The cofactor is FAD.

The protein localises to the cytoplasm. Functionally, NAD-binding protein involved in the addition of a carboxymethylaminomethyl (cmnm) group at the wobble position (U34) of certain tRNAs, forming tRNA-cmnm(5)s(2)U34. The sequence is that of tRNA uridine 5-carboxymethylaminomethyl modification enzyme MnmG from Legionella pneumophila (strain Paris).